The primary structure comprises 372 residues: Transcription factor YY2 (372 aa).

A mediates transcriptional activation region spans residues 32–102; that stretch reads MEDIPTESVQ…SDNQLGNDLE (71 aa). The span at 126 to 136 shows a compositional bias: low complexity; sequence SAASTSTSTQS. 2 disordered regions span residues 126-172 and 186-210; these read SAAS…WEQK and TMWS…PPDY. Residues 137-146 are compositionally biased toward basic residues; that stretch reads RSKKPSKKPS. 2 stretches are compositionally biased toward polar residues: residues 154–165 and 186–196; these read EANPAGSSSSLG and TMWSPNDNNDQ. The segment at 237-372 is mediates transcriptional repression; it reads EFTKVKPKRS…LTHVKTKNNP (136 aa). 4 consecutive C2H2-type zinc fingers follow at residues 254-278, 283-305, 311-335, and 341-365; these read VPCS…LHIH, HVCA…QLVH, FQCT…LRIH, and FVCP…ILTH.

The protein belongs to the YY transcription factor family. As to expression, expressed in kidney, liver, spleen and testis but not in colon.

Its subcellular location is the nucleus. In terms of biological role, functions as a multifunctional transcription factor that may exhibit positive and negative control on a large number of genes. May antagonize YY1 and function in development and differentiation. This Homo sapiens (Human) protein is Transcription factor YY2 (YY2).